We begin with the raw amino-acid sequence, 340 residues long: Cytochrome c peroxidase, mitochondrial (340 aa).

Residues 1 to 17 (MRSFRAVRNFSTTAKRL) constitute a mitochondrion transit peptide. His101 functions as the Proton acceptor in the catalytic mechanism. The tract at residues 175-198 (WKRGRVDEPESASPPDGSLPDASQ) is disordered. His224 is a binding site for heme b. Trp240 functions as the Tryptophan radical intermediate in the catalytic mechanism.

This sequence belongs to the peroxidase family. Cytochrome c peroxidase subfamily. In terms of assembly, forms a one-to-one complex with cytochrome c. Requires heme b as cofactor.

Its subcellular location is the mitochondrion matrix. It is found in the mitochondrion intermembrane space. The enzyme catalyses 2 Fe(II)-[cytochrome c] + H2O2 + 2 H(+) = 2 Fe(III)-[cytochrome c] + 2 H2O. Its function is as follows. Destroys radicals which are normally produced within the cells and which are toxic to biological systems. The chain is Cytochrome c peroxidase, mitochondrial (CCP1) from Yarrowia lipolytica (strain CLIB 122 / E 150) (Yeast).